The primary structure comprises 212 residues: Large ribosomal subunit protein uL3 (212 aa).

Residues 133–156 (SMTHGSKNHRLPGSTGAGTTPGRV) are disordered.

Belongs to the universal ribosomal protein uL3 family. As to quaternary structure, part of the 50S ribosomal subunit. Forms a cluster with proteins L14 and L19.

Functionally, one of the primary rRNA binding proteins, it binds directly near the 3'-end of the 23S rRNA, where it nucleates assembly of the 50S subunit. In Crocosphaera subtropica (strain ATCC 51142 / BH68) (Cyanothece sp. (strain ATCC 51142)), this protein is Large ribosomal subunit protein uL3.